The following is a 179-amino-acid chain: uncharacterized protein (179 aa).

This is an uncharacterized protein from Sulfolobus islandicus rod-shaped virus 1 (SIRV-1).